Consider the following 104-residue polypeptide: Protein ArtA (104 aa).

This is Protein ArtA (artA) from Escherichia coli (strain K12).